A 273-amino-acid chain; its full sequence is 3-methyl-2-oxobutanoate hydroxymethyltransferase 3 (273 aa).

Residues Asp49 and Asp88 each coordinate Mg(2+). 3-methyl-2-oxobutanoate is bound by residues 49-50, Asp88, and Lys118; that span reads DS. Residue Glu120 participates in Mg(2+) binding. The Proton acceptor role is filled by Glu187.

The protein belongs to the PanB family. As to quaternary structure, homodecamer; pentamer of dimers. It depends on Mg(2+) as a cofactor.

It is found in the cytoplasm. It carries out the reaction 3-methyl-2-oxobutanoate + (6R)-5,10-methylene-5,6,7,8-tetrahydrofolate + H2O = 2-dehydropantoate + (6S)-5,6,7,8-tetrahydrofolate. It participates in cofactor biosynthesis; (R)-pantothenate biosynthesis; (R)-pantoate from 3-methyl-2-oxobutanoate: step 1/2. Functionally, catalyzes the reversible reaction in which hydroxymethyl group from 5,10-methylenetetrahydrofolate is transferred onto alpha-ketoisovalerate to form ketopantoate. The chain is 3-methyl-2-oxobutanoate hydroxymethyltransferase 3 from Bradyrhizobium diazoefficiens (strain JCM 10833 / BCRC 13528 / IAM 13628 / NBRC 14792 / USDA 110).